Reading from the N-terminus, the 435-residue chain is Large ribosomal subunit protein mL65 (435 aa).

The protein belongs to the mitochondrion-specific ribosomal protein mL65 family. As to quaternary structure, component of the mitochondrial ribosome small subunit (28S) which comprises a 12S rRNA and about 30 distinct proteins.

It is found in the mitochondrion. This Bos taurus (Bovine) protein is Large ribosomal subunit protein mL65 (MRPS30).